The following is a 598-amino-acid chain: Ceramide transfer protein (598 aa).

Positions 1 to 11 (MSDNQSWNSSG) are enriched in polar residues. The tract at residues 1-24 (MSDNQSWNSSGSEEDPETESGPPV) is disordered. One can recognise a PH domain in the interval 23–117 (PVERCGVLSK…WIDAIEQHKT (95 aa)). Residue Ser-126 is modified to Phosphoserine. Ser-132 carries the post-translational modification Phosphoserine; by PKD. Ser-135 is modified (phosphoserine). The segment at 202-221 (DDEDDFPTTRSDGDFLHNTN) is disordered. The stretch at 268–301 (KREESWQKRHDKEMEKRRRLEEAYKNAMAELKKK) forms a coiled coil. Ser-315 carries the post-translational modification Phosphoserine. The short motif at 321-327 (EFFDAVE) is the FFAT element. Residues 363 to 592 (GTHRFVQKVE…FTSYVQEKTA (230 aa)) form the START domain. The an N-acylsphing-4-enine site is built by Glu-446, Gln-467, Asn-504, and Tyr-553.

In terms of assembly, interacts with VAPA and VAPB. Interaction with VAPB is less efficient than with VAPA. Interacts (via FFAT motif) with the MOSPD2 (via MSP domain). Post-translationally, phosphorylation on Ser-132 decreases the affinity toward phosphatidylinositol 4-phosphate at Golgi membranes and reduces ceramide transfer activity. Inactivated by hyperphosphorylation of serine residues by CSNK1G2/CK1 that triggers dissociation from the Golgi complex, thus down-regulating ER-to-Golgi transport of ceramide and sphingomyelin synthesis.

The protein localises to the cytoplasm. The protein resides in the golgi apparatus. It localises to the endoplasmic reticulum. It carries out the reaction N-hexadecanoylsphing-4-enine(in) = N-hexadecanoylsphing-4-enine(out). Its function is as follows. Shelters ceramides and diacylglycerol lipids inside its START domain and mediates the intracellular trafficking of ceramides and diacylglycerol lipids in a non-vesicular manner. The sequence is that of Ceramide transfer protein (CERT1) from Cricetulus griseus (Chinese hamster).